A 209-amino-acid chain; its full sequence is Response regulator protein VraR (209 aa).

Residues 4–120 (KVLFVDDHEM…DIADAVRKTY (117 aa)) enclose the Response regulatory domain. A 4-aspartylphosphate modification is found at Asp-55. An HTH luxR-type domain is found at 141-206 (RAELYEMLTE…QAVIYAFQHN (66 aa)). A DNA-binding region (H-T-H motif) is located at residues 165 to 184 (NQEIASASHITIKTVKTHVS).

Post-translationally, phosphorylated by VraS.

The protein localises to the cytoplasm. Its function is as follows. Member of the two-component regulatory system VraS/VraR involved in the control of the cell wall peptidoglycan biosynthesis. The sequence is that of Response regulator protein VraR (vraR) from Staphylococcus epidermidis (strain ATCC 35984 / DSM 28319 / BCRC 17069 / CCUG 31568 / BM 3577 / RP62A).